We begin with the raw amino-acid sequence, 525 residues long: Histidine-rich glycoprotein (525 aa).

A signal peptide spans 1 to 18; it reads MKALIAALLLITLQYSCA. Cystatin domains lie at 19–136 and 137–254; these read VSPT…SALA and NTKD…NING. Disulfide bonds link C24–C504, C78–C89, C105–C126, C203–C417, and C218–C241. The interval 41–84 is interaction with ATP5F1A; the sequence is RRRDGYLFQLLRIADAHLDRVENTTVYYLVLDVQESDCSVLSRK. An N-linked (GlcNAc...) asparagine glycan is attached at N63. N125 carries N-linked (GlcNAc...) asparagine glycosylation. A disordered region spans residues 252 to 407; that stretch reads INGVPPHLGH…GHHPHGHHPH (156 aa). Residues 284-293 are compositionally biased toward basic residues; sequence RDHHHPHKPH. Over residues 310–320 the composition is skewed to pro residues; that stretch reads PPLPQGPPPLL. Over residues 323-348 the composition is skewed to polar residues; that stretch reads SCSSCQHATFGTNGAQRHSHNNNSSD. N344 and N345 each carry an N-linked (GlcNAc...) asparagine glycan. Residues 348–382 are necessary for endothelial cell focal adhesions and anti-angiogenic activities; that stretch reads DLHPHKHHSHEQHPHGHHPHAHHPHEHDTHRQHPH. Composition is skewed to basic residues over residues 351 to 371 and 379 to 407; these read PHKH…AHHP and QHPH…HHPH.

Interacts (via the HRR domain) with TPM1; the interaction appears to contribute to the antiangiogenic properties of the HRR domain. Interacts with THBS2; the interaction blocks the antiangiogenic effect of THBS2 with CD36. Interacts with THBS1 (via the TSP type I repeats); the interaction blocks the antiangiogenic effect of THBS1 with CD3. Interacts with PLG (via its Kringle domains); the interaction tethers PLG to the cell surface and enhances its activation. Interacts with HPSE; the interaction is enhanced at acidic pH, partially inhibits binding of HPSE to cell surface receptors and modulates its enzymatic activity. Interacts (via the HRR domain) with TMP1; the interaction partially mediates the antiangiogenic properties of HRG. Interacts with kappa and lambda light chains of IgG molecules. Interacts with ATP5F1A; the interaction occurs on the surface of T-cells and alters their cell morphology in concert with CONA. Binds IgG molecules containing kappa and lambda light chains and inhibits the formation of insoluble immunoglobulin complexes. Interacts with F12; the interaction, which is enhanced in the presence of zinc ions and inhibited by heparin-binding to HRG, inhibits factor XII autoactivation and contact-initiated coagulation. Zn(2+) serves as cofactor. Post-translationally, proteolytic cleavage produces several HRG fragments which are mostly disulfide-linked and, therefore, not released. Cleavage by plasmin is inhibited in the presence of heparin, zinc ions or in an acidic environment. Cleavage reduces binding of HRG to heparan sulfate, but enhances the ability of HRG to bind and tether plasminogen to the cell surface. On platelet activation, releases a 33 kDa antiangiogenic peptide which encompasses the HRR. Also cleaved in the C-terminal by plasmin. N-glycosylated. As to expression, expressed in macrophages and in malignant cells. Expressed by the liver and secreted in plasma (at protein level).

It is found in the secreted. Plasma glycoprotein that binds a number of ligands such as heme, heparin, heparan sulfate, thrombospondin, plasminogen, and divalent metal ions. Binds heparin and heparin/glycosaminoglycans in a zinc-dependent manner. Binds heparan sulfate on the surface of liver, lung, kidney and heart endothelial cells. Binds to N-sulfated polysaccharide chains on the surface of liver endothelial cells. Inhibits rosette formation. Acts as an adapter protein and is implicated in regulating many processes such as immune complex and pathogen clearance, cell chemotaxis, cell adhesion, angiogenesis, coagulation and fibrinolysis. Mediates clearance of necrotic cells through enhancing the phagocytosis of necrotic cells in a heparan sulfate-dependent pathway. This process can be regulated by the presence of certain HRG ligands such as heparin and zinc ions. Binds to IgG subclasses of immunoglobins containing kappa and lambda light chains with different affinities regulating their clearance and inhibiting the formation of insoluble immune complexes. Tethers plasminogen to the cell surface. Binds T-cells and alters the cell morphology. Modulates angiogenesis by blocking the CD6-mediated antiangiongenic effect of thrombospondins, THBS1 and THBS2. Acts as a regulator of the vascular endothelial growth factor (VEGF) signaling pathway; inhibits endothelial cell motility by reducing VEGF-induced complex formation between PXN/paxillin and ILK/integrin-linked protein kinase and by promoting inhibition of VEGF-induced tyrosine phosphorylation of focal adhesion kinases and alpha-actinins in endothelial cells. Also plays a role in the regulation of tumor angiogenesis and tumor immune surveillance. Normalizes tumor vessels and promotes antitumor immunity by polarizing tumor-associated macrophages, leading to decreased tumor growth and metastasis. The polypeptide is Histidine-rich glycoprotein (HRG) (Homo sapiens (Human)).